Reading from the N-terminus, the 123-residue chain is Small ribosomal subunit protein uS13 (123 aa).

Residues 93-123 (HRKGLPVRGQNTKNNARTRKGPAKAIAGKKK) are disordered. The segment covering 108–123 (ARTRKGPAKAIAGKKK) has biased composition (basic residues).

This sequence belongs to the universal ribosomal protein uS13 family. As to quaternary structure, part of the 30S ribosomal subunit. Forms a loose heterodimer with protein S19. Forms two bridges to the 50S subunit in the 70S ribosome.

Functionally, located at the top of the head of the 30S subunit, it contacts several helices of the 16S rRNA. In the 70S ribosome it contacts the 23S rRNA (bridge B1a) and protein L5 of the 50S subunit (bridge B1b), connecting the 2 subunits; these bridges are implicated in subunit movement. Contacts the tRNAs in the A and P-sites. The chain is Small ribosomal subunit protein uS13 from Leuconostoc mesenteroides subsp. mesenteroides (strain ATCC 8293 / DSM 20343 / BCRC 11652 / CCM 1803 / JCM 6124 / NCDO 523 / NBRC 100496 / NCIMB 8023 / NCTC 12954 / NRRL B-1118 / 37Y).